Consider the following 598-residue polypeptide: F-box/WD repeat-containing protein 8 (598 aa).

Position 1 is an N-acetylmethionine (M1). The interval 17–93 is disordered; sequence LAQAQAPKKR…RSPLAREGAG (77 aa). The span at 29–40 shows a compositional bias: basic and acidic residues; the sequence is PEAAERRARRPE. Residues 61–71 show a composition bias toward low complexity; sequence EGAGRPPAARA. 2 positions are modified to phosphoserine: S83 and S85. Positions 113-159 constitute an F-box domain; the sequence is PFFDIQLPYELAINIFQYLDRKELGRCAQVSKTWKVIAEDEVLWYRL. WD repeat units lie at residues 201 to 250, 259 to 299, 300 to 340, 341 to 383, 384 to 429, 430 to 475, 476 to 513, and 514 to 561; these read AVSE…LESE, QPNV…FEHD, ARIQ…AEFE, VPKL…LLYA, HGPP…LKLG, NVLR…SAHQ, LRVS…EVYS, and GHPV…AYEF.

As to quaternary structure, component of the Cul7-RING(FBXW8) complex consisting of CUL7, RBX1, SKP1 and FBXW8; within the complex interacts with CUL7 and SKP1. Interacts with GLMN isoform 1. Interacts with OBSL1, CUL1, CUL2, CCT6B, PFDN5, CCT2, CCT3, CCT6A, CCT7, VBP1, CCDC8, ARF1, TRIP13, PDCD5 and GORASP1. Interacts with MAP4K1/HPK1 (when autophosphorylated). Associated component of the 3M complex. Interacts with POUF51 (when phosphorylated on 'Ser-355'). Post-translationally, phosphorylation at Ser-85 by mTORC2 promotes FBXW8 stabilization, allowing its translocation to the cytosol in response to insulin.

The protein resides in the cytoplasm. It is found in the perinuclear region. It localises to the golgi apparatus. Its pathway is protein modification; protein ubiquitination. Functionally, substrate-recognition component of the Cul7-RING(FBXW8) ubiquitin ligase complex, which mediates the ubiquitination and subsequent proteasomal degradation of target proteins. The Cul7-RING(FBXW8) complex mediates ubiquitination and consequent degradation of GORASP1, acting as a component of the ubiquitin ligase pathway that regulates Golgi morphogenesis and dendrite patterning in brain. Mediates ubiquitination and degradation of IRS1 in a mTOR-dependent manner: the Cul7-RING(FBXW8) complex recognizes and binds IRS1 previously phosphorylated by S6 kinase (RPS6KB1 or RPS6KB2). The Cul7-RING(FBXW8) complex also mediates ubiquitination of MAP4K1/HPK1: recognizes and binds autophosphorylated MAP4K1/HPK1, leading to its degradation, thereby affecting cell proliferation and differentiation. The Cul7-RING(FBXW8) complex also mediates ubiquitination of phosphorylated cyclin-D1 (CCND1). The Cul7-RING(FBXW8) complex is however not a major regulator of CCND1 stability during the G1/S transition. Associated component of the 3M complex, suggesting that it mediates some of 3M complex functions. This is F-box/WD repeat-containing protein 8 from Homo sapiens (Human).